We begin with the raw amino-acid sequence, 237 residues long: Deoxyribose-phosphate aldolase (237 aa).

The active-site Proton donor/acceptor is Asp-94. The active-site Schiff-base intermediate with acetaldehyde is the Lys-158. Lys-187 (proton donor/acceptor) is an active-site residue.

It belongs to the DeoC/FbaB aldolase family. DeoC type 1 subfamily.

It localises to the cytoplasm. The enzyme catalyses 2-deoxy-D-ribose 5-phosphate = D-glyceraldehyde 3-phosphate + acetaldehyde. It functions in the pathway carbohydrate degradation; 2-deoxy-D-ribose 1-phosphate degradation; D-glyceraldehyde 3-phosphate and acetaldehyde from 2-deoxy-alpha-D-ribose 1-phosphate: step 2/2. Its function is as follows. Catalyzes a reversible aldol reaction between acetaldehyde and D-glyceraldehyde 3-phosphate to generate 2-deoxy-D-ribose 5-phosphate. The polypeptide is Deoxyribose-phosphate aldolase (Lactobacillus acidophilus (strain ATCC 700396 / NCK56 / N2 / NCFM)).